The primary structure comprises 112 residues: Small ribosomal subunit protein bS6 (112 aa).

It belongs to the bacterial ribosomal protein bS6 family.

In terms of biological role, binds together with bS18 to 16S ribosomal RNA. The chain is Small ribosomal subunit protein bS6 from Chlamydia trachomatis serovar L2 (strain ATCC VR-902B / DSM 19102 / 434/Bu).